The following is a 364-amino-acid chain: Phosphoserine aminotransferase (364 aa).

Arginine 42 is an L-glutamate binding site. Pyridoxal 5'-phosphate-binding positions include glycine 76–arginine 77, tryptophan 102, threonine 156, aspartate 175, and glutamine 198. The residue at position 199 (lysine 199) is an N6-(pyridoxal phosphate)lysine. Asparagine 240–threonine 241 is a pyridoxal 5'-phosphate binding site.

The protein belongs to the class-V pyridoxal-phosphate-dependent aminotransferase family. SerC subfamily. Homodimer. It depends on pyridoxal 5'-phosphate as a cofactor.

It localises to the cytoplasm. It carries out the reaction O-phospho-L-serine + 2-oxoglutarate = 3-phosphooxypyruvate + L-glutamate. It catalyses the reaction 4-(phosphooxy)-L-threonine + 2-oxoglutarate = (R)-3-hydroxy-2-oxo-4-phosphooxybutanoate + L-glutamate. The protein operates within amino-acid biosynthesis; L-serine biosynthesis; L-serine from 3-phospho-D-glycerate: step 2/3. Its pathway is cofactor biosynthesis; pyridoxine 5'-phosphate biosynthesis; pyridoxine 5'-phosphate from D-erythrose 4-phosphate: step 3/5. Its function is as follows. Catalyzes the reversible conversion of 3-phosphohydroxypyruvate to phosphoserine and of 3-hydroxy-2-oxo-4-phosphonooxybutanoate to phosphohydroxythreonine. This chain is Phosphoserine aminotransferase, found in Shewanella sediminis (strain HAW-EB3).